Consider the following 281-residue polypeptide: MKFVGAHVSAAGGVDQAVIRAHELEATAFALFTKNQRQWRAAPLAEDVIEKFKQACEQYGYTSAQILPHDSYLINLGHPVTEALEKSREAFIDEMLRCQQLGLSLLNFHPGSHLLQIDEGKCLARIAESINIALDATEGVTAVIENTAGQGSNLGFKFEHLAAIIDGVEDKSRVGVCIDTCHAFAAGYDLRTEADCQHTFGALGDIVGFEYLRGMHLNDAKSEFNSRVDRHHSLGEGNIGKTVFSYIMHDPRFDNIPLILETVNPDIWAEEIAWLKSQAEI.

The Zn(2+) site is built by His-69, His-109, Glu-145, Asp-179, His-182, His-216, Asp-229, His-231, and Glu-261.

Belongs to the AP endonuclease 2 family. It depends on Zn(2+) as a cofactor.

The catalysed reaction is Endonucleolytic cleavage to 5'-phosphooligonucleotide end-products.. Functionally, endonuclease IV plays a role in DNA repair. It cleaves phosphodiester bonds at apurinic or apyrimidinic (AP) sites, generating a 3'-hydroxyl group and a 5'-terminal sugar phosphate. The chain is Probable endonuclease 4 from Yersinia enterocolitica serotype O:8 / biotype 1B (strain NCTC 13174 / 8081).